Reading from the N-terminus, the 146-residue chain is Aspartate carbamoyltransferase regulatory chain (146 aa).

Residues Cys-102, Cys-107, Cys-131, and Cys-134 each coordinate Zn(2+).

It belongs to the PyrI family. In terms of assembly, contains catalytic and regulatory chains. The cofactor is Zn(2+).

In terms of biological role, involved in allosteric regulation of aspartate carbamoyltransferase. This chain is Aspartate carbamoyltransferase regulatory chain, found in Clostridium acetobutylicum (strain ATCC 824 / DSM 792 / JCM 1419 / IAM 19013 / LMG 5710 / NBRC 13948 / NRRL B-527 / VKM B-1787 / 2291 / W).